A 691-amino-acid polypeptide reads, in one-letter code: Ubiquitin-like domain-containing protein CIP73 (691 aa).

Residues 22–97 (IEIKIKMLDS…LHLVARHPDL (76 aa)) enclose the Ubiquitin-like domain. Disordered regions lie at residues 92–118 (ARHPDLTPPGSLPNHSATEPNSSTGHG), 176–203 (TGLGRTSDFTGNPSRPQPEQAGFRISSD), 264–283 (RNEERGFVSSRLSSTPEGLS), 432–473 (ASTT…ASIA), 499–554 (SVNT…SSRV), 590–624 (EIHVEDPSSQGTTAGVTSAATSSGAAQAPEAEPNV), and 645–691 (HIGR…QKME). Polar residues-rich tracts occupy residues 104–118 (PNHSATEPNSSTGHG), 178–189 (LGRTSDFTGNPS), 273–283 (SRLSSTPEGLS), 446–465 (TQSASVQRNTGESSVNQTTS), and 499–523 (SVNTNNEQGSQPASQQHTAPHSTAE). A compositionally biased stretch (basic and acidic residues) spans 525–535 (TLHRQSMEDSA). Positions 536–554 (RNGTLPTPNTQQEPSSSRV) are enriched in polar residues. Over residues 597-617 (SSQGTTAGVTSAATSSGAAQA) the composition is skewed to low complexity.

In terms of assembly, interacts with CCAMK. Post-translationally, phosphorylated at the N-terminus by CCAMK. Highly epressed in roots. Expressed at very low levels in leaves and stems.

It localises to the nucleus. Its function is as follows. Involved in root nodulation. Required for root nodule organogenesis after infection by symbiotic rhizobia. Probably not involved in arbuscular mycorrhizal (AM) symbiosis. Acts downstream of CCAMK. This chain is Ubiquitin-like domain-containing protein CIP73, found in Lotus japonicus (Lotus corniculatus var. japonicus).